Here is a 188-residue protein sequence, read N- to C-terminus: Protein GrpE (188 aa).

Basic and acidic residues predominate over residues Met-1–Gln-16. Residues Met-1–Glu-31 form a disordered region.

The protein belongs to the GrpE family. Homodimer.

It localises to the cytoplasm. Functionally, participates actively in the response to hyperosmotic and heat shock by preventing the aggregation of stress-denatured proteins, in association with DnaK and GrpE. It is the nucleotide exchange factor for DnaK and may function as a thermosensor. Unfolded proteins bind initially to DnaJ; upon interaction with the DnaJ-bound protein, DnaK hydrolyzes its bound ATP, resulting in the formation of a stable complex. GrpE releases ADP from DnaK; ATP binding to DnaK triggers the release of the substrate protein, thus completing the reaction cycle. Several rounds of ATP-dependent interactions between DnaJ, DnaK and GrpE are required for fully efficient folding. The chain is Protein GrpE from Bacillus anthracis.